The sequence spans 233 residues: Type IV secretion system protein PtlE homolog (233 aa).

Residues 42-62 form a helical membrane-spanning segment; it reads VAWAALAVTALSLIAIATMLP.

The protein belongs to the virB8 family.

The protein resides in the cell inner membrane. In Bordetella bronchiseptica (strain ATCC BAA-588 / NCTC 13252 / RB50) (Alcaligenes bronchisepticus), this protein is Type IV secretion system protein PtlE homolog (ptlE).